We begin with the raw amino-acid sequence, 145 residues long: Probable low molecular weight protein-tyrosine-phosphatase EpsP (145 aa).

The Nucleophile role is filled by C9. The active site involves R15. Residue D114 is the Proton donor of the active site.

It belongs to the low molecular weight phosphotyrosine protein phosphatase family.

It catalyses the reaction O-phospho-L-tyrosyl-[protein] + H2O = L-tyrosyl-[protein] + phosphate. Its pathway is glycan metabolism; exopolysaccharide biosynthesis. May be involved in assembly or function of the EPS I polymerization/export complex and/or the EpsB ATPase. Alternatively it may function in the removal of the terminal phosphate from C55-isoprenyl pyrophosphate in order to recycle the C55-isoprenyl phosphate lipid carrier used in the synthesis of polysaccharide repeat units. In Ralstonia solanacearum (Pseudomonas solanacearum), this protein is Probable low molecular weight protein-tyrosine-phosphatase EpsP (epsP).